The chain runs to 198 residues: Probable chemoreceptor glutamine deamidase CheD (198 aa).

It belongs to the CheD family.

The catalysed reaction is L-glutaminyl-[protein] + H2O = L-glutamyl-[protein] + NH4(+). In terms of biological role, probably deamidates glutamine residues to glutamate on methyl-accepting chemotaxis receptors (MCPs), playing an important role in chemotaxis. The polypeptide is Probable chemoreceptor glutamine deamidase CheD (Xanthomonas axonopodis pv. citri (strain 306)).